The sequence spans 246 residues: Transmembrane protein 41 homolog (246 aa).

Helical transmembrane passes span 12-32 (WLVL…YSNF), 68-88 (SVVL…AIPG), 101-123 (PFYV…CYTI), 159-179 (IFLR…SPVL), 182-202 (PLAP…FLYI), and 219-239 (SWSS…PILL).

The protein belongs to the TMEM41 family.

Its subcellular location is the membrane. This Caenorhabditis elegans protein is Transmembrane protein 41 homolog (tag-175).